A 47-amino-acid chain; its full sequence is Large ribosomal subunit protein bL34 (47 aa).

The protein belongs to the bacterial ribosomal protein bL34 family.

The chain is Large ribosomal subunit protein bL34 from Mycolicibacterium vanbaalenii (strain DSM 7251 / JCM 13017 / BCRC 16820 / KCTC 9966 / NRRL B-24157 / PYR-1) (Mycobacterium vanbaalenii).